We begin with the raw amino-acid sequence, 288 residues long: Lipoyl synthase (288 aa).

Residues Cys39, Cys44, Cys50, Cys65, Cys69, Cys72, and Ser276 each contribute to the [4Fe-4S] cluster site. Residues 51 to 265 (WGKGTATFMI…KETGLKKGFE (215 aa)) form the Radical SAM core domain.

It belongs to the radical SAM superfamily. Lipoyl synthase family. Requires [4Fe-4S] cluster as cofactor.

It localises to the cytoplasm. The catalysed reaction is [[Fe-S] cluster scaffold protein carrying a second [4Fe-4S](2+) cluster] + N(6)-octanoyl-L-lysyl-[protein] + 2 oxidized [2Fe-2S]-[ferredoxin] + 2 S-adenosyl-L-methionine + 4 H(+) = [[Fe-S] cluster scaffold protein] + N(6)-[(R)-dihydrolipoyl]-L-lysyl-[protein] + 4 Fe(3+) + 2 hydrogen sulfide + 2 5'-deoxyadenosine + 2 L-methionine + 2 reduced [2Fe-2S]-[ferredoxin]. Its pathway is protein modification; protein lipoylation via endogenous pathway; protein N(6)-(lipoyl)lysine from octanoyl-[acyl-carrier-protein]: step 2/2. In terms of biological role, catalyzes the radical-mediated insertion of two sulfur atoms into the C-6 and C-8 positions of the octanoyl moiety bound to the lipoyl domains of lipoate-dependent enzymes, thereby converting the octanoylated domains into lipoylated derivatives. The protein is Lipoyl synthase of Bacteroides fragilis (strain ATCC 25285 / DSM 2151 / CCUG 4856 / JCM 11019 / LMG 10263 / NCTC 9343 / Onslow / VPI 2553 / EN-2).